We begin with the raw amino-acid sequence, 159 residues long: MNIKIVCVGKLKEKYFKDGIAEYVKRMSRFAKVKIVQVPDEKAPEKLSPAEMEQVKEIEGKRILDKIKDKEYVYVTAIKGKERTSEAFAKELSDLTTYGHSDITFVIGGSLGTSDAVNKRADDLISFGKFTMPHQLMRLVLIEQIYRAFMINSGSPYHK.

G108 provides a ligand contact to S-adenosyl-L-methionine.

Belongs to the RNA methyltransferase RlmH family. In terms of assembly, homodimer.

It localises to the cytoplasm. The catalysed reaction is pseudouridine(1915) in 23S rRNA + S-adenosyl-L-methionine = N(3)-methylpseudouridine(1915) in 23S rRNA + S-adenosyl-L-homocysteine + H(+). In terms of biological role, specifically methylates the pseudouridine at position 1915 (m3Psi1915) in 23S rRNA. In Lactobacillus johnsonii (strain CNCM I-12250 / La1 / NCC 533), this protein is Ribosomal RNA large subunit methyltransferase H.